Reading from the N-terminus, the 914-residue chain is Valine--tRNA ligase (914 aa).

A 'HIGH' region motif is present at residues 45-55; the sequence is PNVTGSLHMGH. The short motif at 538–542 is the 'KMSKS' region element; it reads KMSKS. Lysine 541 contributes to the ATP binding site. Positions 847 to 914 form a coiled coil; it reads LVDLDALKGR…LARKRLADLS (68 aa).

The protein belongs to the class-I aminoacyl-tRNA synthetase family. ValS type 1 subfamily. Monomer.

The protein resides in the cytoplasm. The catalysed reaction is tRNA(Val) + L-valine + ATP = L-valyl-tRNA(Val) + AMP + diphosphate. Functionally, catalyzes the attachment of valine to tRNA(Val). As ValRS can inadvertently accommodate and process structurally similar amino acids such as threonine, to avoid such errors, it has a 'posttransfer' editing activity that hydrolyzes mischarged Thr-tRNA(Val) in a tRNA-dependent manner. This is Valine--tRNA ligase from Parasynechococcus marenigrum (strain WH8102).